The primary structure comprises 349 residues: MIINSLKRFGITTGAAASAAAKAAVIGLLNREKRNTVVIPTPIGLRLEIPVEKVEIDSGIACAEVKKFSGDNPDILDGLAIRCCAKLNESNEIVIVGGKGVGKVTRSGLKATMGETAISPTVRDMVINAIREVTDKGIQITIEVPNGDIIAENTLNKMVGIVGGISILGTTGIETPVSDDDYLEHIKCELNVIRQSYDFVVIAPGNSAAKYASKLFDSNSIIKVGDRIGDSIKLASSVFRKVILAGLPAKLLKVYAGIFNTHFSQGDARLESLTHASVLAGLPYDVLTKITNALSVEEAFTYMTKEQRRKVMKIVAEKILSRIKSFNGDINFCVIIFDYDGESLSRVGC.

The protein belongs to the CbiD family.

It carries out the reaction Co-precorrin-5B + S-adenosyl-L-methionine = Co-precorrin-6A + S-adenosyl-L-homocysteine. It functions in the pathway cofactor biosynthesis; adenosylcobalamin biosynthesis; cob(II)yrinate a,c-diamide from sirohydrochlorin (anaerobic route): step 6/10. Its function is as follows. Catalyzes the methylation of C-1 in cobalt-precorrin-5B to form cobalt-precorrin-6A. The sequence is that of Cobalt-precorrin-5B C(1)-methyltransferase from Saccharolobus islandicus (strain M.16.27) (Sulfolobus islandicus).